A 164-amino-acid chain; its full sequence is uncharacterized protein (164 aa).

A disordered region spans residues Met-1–His-77.

This is an uncharacterized protein from Homo sapiens (Human).